The following is a 305-amino-acid chain: Mitochondrial uncoupling protein 3 (305 aa).

3 Solcar repeats span residues 14-100 (TRIL…LKGL), 112-204 (LPLA…AKHF), and 213-299 (DNIF…FRLL). The next 6 membrane-spanning stretches (helical) occupy residues 16–36 (ILLA…IDLT), 69–89 (VIGL…YTPI), 118–138 (ALVG…ADLV), 178–198 (KGVL…LACY), 219–239 (TLAS…ADVV), and 272–292 (WKGF…FWVS).

It belongs to the mitochondrial carrier (TC 2.A.29) family.

Its subcellular location is the mitochondrion inner membrane. PUMPS are mitochondrial transporter proteins that create proton leaks across the inner mitochondrial membrane, thus uncoupling oxidative phosphorylation. This leads to a decrease in the efficiency of oxidative phosphorylation and an increase in heat production. May be involved in protecting plant cells against oxidative stress damage. The chain is Mitochondrial uncoupling protein 3 (PUMP3) from Arabidopsis thaliana (Mouse-ear cress).